The chain runs to 384 residues: Prokineticin receptor 2 (384 aa).

The Extracellular portion of the chain corresponds to 1-54 (MAAQNGNTSFTPNFNPPQDHASSLSFNFSYGDYDLPMDEDEDMTKTRTFFAAKI). N-linked (GlcNAc...) asparagine glycans are attached at residues N7 and N27. The chain crosses the membrane as a helical span at residues 55–75 (VIGIALAGIMLVCGIGNFVFI). The Cytoplasmic portion of the chain corresponds to 76 to 89 (AALTRYKKLRNLTN). A helical transmembrane segment spans residues 90–110 (LLIANLAISDFLVAIICCPFE). Residues 111–136 (MDYYVVRQLSWEHGHVLCASVNYLRT) lie on the Extracellular side of the membrane. An intrachain disulfide couples C128 to C208. The helical transmembrane segment at 137–157 (VSLYVSTNALLAIAIDRYLAI) threads the bilayer. Topologically, residues 158–171 (VHPLKPRMNYQTAS) are cytoplasmic. Residues 172-192 (FLIALVWMVSILIAIPSAYFA) traverse the membrane as a helical segment. The Extracellular segment spans residues 193–223 (TETVLFIVKSQEKIFCGQIWPVDQQLYYKSY). The helical transmembrane segment at 224–244 (FLFIFGVEFVGPVVTMTLCYA) threads the bilayer. Topologically, residues 245–273 (RISRELWFKAVPGFQTEQIRKRLRCRRKT) are cytoplasmic. Residues 274-294 (VLVLMCILTAYVLCWAPFYGF) traverse the membrane as a helical segment. At 295–313 (TIVRDFFPTVFVKEKHYLT) the chain is on the extracellular side. Residues 314–334 (AFYVVECIAMSNSMINTVCFV) form a helical membrane-spanning segment. Topologically, residues 335–384 (TVKNNTMKYFKKMMLLHWRPSQRGSKSSADLDLRTNGVPTTEEVDCIRLK) are cytoplasmic.

Belongs to the G-protein coupled receptor 1 family. Homodimer. Expressed in the ileocecum, thyroid gland, pituitary gland, salivary gland, adrenal gland, testis, ovary and brain.

Its subcellular location is the cell membrane. Receptor for prokineticin 2. Exclusively coupled to the G(q) subclass of heteromeric G proteins. Activation leads to mobilization of calcium, stimulation of phosphoinositide turnover and activation of p44/p42 mitogen-activated protein kinase. In Homo sapiens (Human), this protein is Prokineticin receptor 2 (PROKR2).